The primary structure comprises 157 residues: Transcription elongation factor GreA (157 aa).

Belongs to the GreA/GreB family.

Its function is as follows. Necessary for efficient RNA polymerase transcription elongation past template-encoded arresting sites. The arresting sites in DNA have the property of trapping a certain fraction of elongating RNA polymerases that pass through, resulting in locked ternary complexes. Cleavage of the nascent transcript by cleavage factors such as GreA or GreB allows the resumption of elongation from the new 3'terminus. GreA releases sequences of 2 to 3 nucleotides. The protein is Transcription elongation factor GreA of Bartonella henselae (strain ATCC 49882 / DSM 28221 / CCUG 30454 / Houston 1) (Rochalimaea henselae).